The chain runs to 458 residues: Ammonium transporter Rh type B (458 aa).

Over 1-13 the chain is Cytoplasmic; it reads MAGSPSRAAGRRL. The chain crosses the membrane as a helical span at residues 14 to 34; the sequence is QLPLLCLFLQGATAVLFAVFV. The Extracellular portion of the chain corresponds to 35–61; sequence RYNHKTDAALWHRGNHSNADNEFYFRY. The N-linked (GlcNAc...) asparagine glycan is linked to N49. Residues 62–82 form a helical membrane-spanning segment; it reads PSFQDVHAMVFVGFGFLMVFL. Residues 83-86 are Cytoplasmic-facing; that stretch reads QRYG. A helical membrane pass occupies residues 87–107; it reads FSSVGFTFLLAAFALQWSTLV. Residues 108 to 124 are Extracellular-facing; sequence QGFLHSFHSGHIHVGVE. The helical transmembrane segment at 125-145 threads the bilayer; that stretch reads SMINADFCAGAVLISFGAVLG. The Cytoplasmic portion of the chain corresponds to 146 to 149; sequence KTGP. Residues 150 to 170 form a helical membrane-spanning segment; the sequence is AQLLLMALLEVVLFGINEFVL. Over 171–178 the chain is Extracellular; that stretch reads LHLLGVRD. The chain crosses the membrane as a helical span at residues 179–201; sequence AGGSMTIHTFGAYFGLVLSRVLY. Residues 202 to 219 lie on the Cytoplasmic side of the membrane; the sequence is RPQLEKSKHRQGSVYHSD. Residues 220 to 240 traverse the membrane as a helical segment; it reads LFAMIGTIFLWIFWPSFNSAL. The Extracellular segment spans residues 241–251; it reads TALGAGQHRTA. The chain crosses the membrane as a helical span at residues 252 to 272; it reads LNTYYSLAASTLGTFALSALV. At 273 to 282 the chain is on the cytoplasmic side; it reads GEDGRLDMVH. Residues 283-303 form a helical membrane-spanning segment; that stretch reads IQNAALAGGVVVGTSSEMMLT. Position 304 (P304) is a topological domain, extracellular. A helical transmembrane segment spans residues 305-325; that stretch reads FGALAAGFLAGTVSTLGYKFF. Residues 326–346 are Cytoplasmic-facing; the sequence is TPILESKFKVQDTCGVHNLHG. Residues 347–367 traverse the membrane as a helical segment; that stretch reads MPGVLGALLGVLVAGLATHEA. Residues 368–393 are Extracellular-facing; sequence YGDGLESVFPLIAEGQRSATSQAMLQ. Residues 394–414 traverse the membrane as a helical segment; that stretch reads LFGLFVTLMFASVGGGLGGLL. Residues 415–458 lie on the Cytoplasmic side of the membrane; it reads LKLPFLDSPPDSQCYEDQVHWQVPGEHEDEAQRPLRVEEADTQA. The tract at residues 416-424 is interaction with ANK3; that stretch reads KLPFLDSPP. The Basolateral sorting signal signature appears at 429–432; the sequence is YEDQ. Residues 439–458 are disordered; it reads GEHEDEAQRPLRVEEADTQA. The span at 444 to 458 shows a compositional bias: basic and acidic residues; the sequence is EAQRPLRVEEADTQA.

Belongs to the ammonium transporter (TC 2.A.49) family. Rh subfamily. As to quaternary structure, interacts (via C-terminus) with ANK2 and ANK3; required for targeting to the basolateral membrane. In terms of processing, N-glycosylated.

The protein localises to the cell membrane. It is found in the basolateral cell membrane. The enzyme catalyses NH4(+)(in) = NH4(+)(out). It carries out the reaction methylamine(out) = methylamine(in). It catalyses the reaction CO2(out) = CO2(in). Its function is as follows. Ammonium transporter involved in the maintenance of acid-base homeostasis. Transports ammonium and its related derivative methylammonium across the basolateral plasma membrane of epithelial cells likely contributing to renal transepithelial ammonia transport and ammonia metabolism. May transport either NH4(+) or NH3 ammonia species predominantly mediating an electrogenic NH4(+) transport. May act as a CO2 channel providing for renal acid secretion. The sequence is that of Ammonium transporter Rh type B (RHBG) from Macaca mulatta (Rhesus macaque).